Here is a 417-residue protein sequence, read N- to C-terminus: mRNA export factor ICP27 homolog (417 aa).

The segment covering 1–28 (MEDIIEGGISSDDDFDSSDSSSDEEESD) has biased composition (acidic residues). The tract at residues 1–143 (MEDIIEGGIS…NGPLRNGPPR (143 aa)) is disordered. Positions 64 to 120 (RQRSPITWEHQSPLSRVYRSPSPMRFGKRPRISSNSTSRSCKTSWADRVREAAAQRR) are interaction with RNA. Residues 88-94 (RFGKRPR) carry the Nuclear localization signal motif. Over residues 96–107 (SSNSTSRSCKTS) the composition is skewed to low complexity. Positions 106 to 120 (TSWADRVREAAAQRR) are interaction with host ALYREF or mouse ALYREF2. Residues 108 to 117 (WADRVREAAA) are compositionally biased toward basic and acidic residues. Positions 118 to 127 (QRRPSRPFRK) match the Nuclear localization signal motif. Positions 120–130 (RPSRPFRKPYS) are enriched in basic residues. Residues 132-141 (PRNGPLRNGP) are compositionally biased toward low complexity. Zn(2+)-binding residues include Cys-295, His-385, Cys-389, and Cys-394. The CHC2-type zinc-finger motif lies at 295 to 394 (CLMQTTPQDH…HLNKCPSSTC (100 aa)).

Belongs to the HHV-1 ICP27 protein family. Homodimer. Homodimerization is required for transactivation. Interacts with host ALYREF and with mouse ALYREF2. Associates in a complex with RNA, and host export factors NXF1/TAP and ALYREF or ALYREF2; these interactions allow nuclear export of viral transcripts.

The protein localises to the host cytoplasm. The protein resides in the host nucleus. Probably acts as a viral splicing factor that regulates viral RNA splicing. Functions as a multifunctional regulator of the expression of viral lytic genes. Early protein that promotes the accumulation and nuclear export of viral intronless RNA transcripts by interacting with mRNAs and cellular export proteins. This chain is mRNA export factor ICP27 homolog (EJRF1), found in Saimiriine herpesvirus 2 (strain 11) (SaHV-2).